Here is a 184-residue protein sequence, read N- to C-terminus: Ribosome-recycling factor (184 aa).

This sequence belongs to the RRF family.

It localises to the cytoplasm. Responsible for the release of ribosomes from messenger RNA at the termination of protein biosynthesis. May increase the efficiency of translation by recycling ribosomes from one round of translation to another. The chain is Ribosome-recycling factor from Natranaerobius thermophilus (strain ATCC BAA-1301 / DSM 18059 / JW/NM-WN-LF).